A 418-amino-acid polypeptide reads, in one-letter code: Probable endo-beta-1,4-glucanase celB (418 aa).

Residues 1 to 18 (MVRTFAVTALALLPLVAA) form the signal peptide. N46, N118, and N136 each carry an N-linked (GlcNAc...) asparagine glycan. E215 serves as the catalytic Nucleophile. E220 acts as the Proton donor in catalysis. N-linked (GlcNAc...) asparagine glycans are attached at residues N234 and N291.

It belongs to the glycosyl hydrolase 7 (cellulase C) family.

The protein resides in the secreted. The enzyme catalyses Endohydrolysis of (1-&gt;4)-beta-D-glucosidic linkages in cellulose, lichenin and cereal beta-D-glucans.. In terms of biological role, has endoglucanase activity on substrates containing beta-1,4 glycosidic bonds, like in carboxymethylcellulose (CMC), hydroxyethylcellulose (HEC) and beta-glucan. Involved in the degradation of complex natural cellulosic substrates. This chain is Probable endo-beta-1,4-glucanase celB (celB), found in Aspergillus clavatus (strain ATCC 1007 / CBS 513.65 / DSM 816 / NCTC 3887 / NRRL 1 / QM 1276 / 107).